The chain runs to 587 residues: MTKKESAVDVLIIGAGPAGLIAAMWMAKCGITTRVVEQRPYQLRVGGADGIHPRSMEMFESFGIDQEITQVWEPITGWALWCRNAEGTLARSDRMDNPTPVRCRWGPGLLQQGIIERIIKEHISEQPSVRIEHETVSASLVIMEDALDKPDSHPCVITLRHDDSAGGSEELVRAKYVIGADGARSWTRKQLGFKMEGTRTRSVWAVTDLVVVSDFPDIRLCTTINSYGEGGLFFLRRERGLTRFYVQLNRADEVEFPAASITQELIIERLQRLLRPYTLTVKRCEWWSSYTVAHYLSDGMTKHDRVFLVGDAVHNHSPLVGLGMNISMQDSYNLGWKLAGVLKKELNPSILSTYETERRPVAAELIETDRFHLQLFDTATVTGSEPAWMLEREEALQPSMQGFAVHYQDPLLTVATEKECRPDAVIPGKRFPQLNVSNHATGKVYSIQSLLKSKGKFHVIVFAGDLSQPLELNRFNTCGTALQQIEEQILPASMGKFNVIAVHRARKTAIELASLADIFFPVDETTGRDYNRVYCDMETSYEEAGIGEQGAVVLVRPDQYVGWCGEVEDVQGLTGYLQPIFEAKKHA.

Residues Ala-7 to Ala-27 traverse the membrane as a helical segment. 2 residues coordinate FAD: Tyr-245 and Asp-311.

It belongs to the PheA/TfdB FAD monooxygenase family. Homodimer. Requires FAD as cofactor.

Its subcellular location is the membrane. It catalyses the reaction cyclo(L-arginyl-L-dehydrotyrosyl) + AH2 + O2 = cyclo(L-arginyl-(Z)-dehydro-3,4-dihydroxytyrosyl) + A + H2O. It functions in the pathway secondary metabolite biosynthesis. Its function is as follows. FAD-dependent monooxygenase; part of the ank cluster that mediates the biosynthesis of NK13650 C, a highly modified cyclo-arginine-tyrosine dipeptide. AnkC uses as substrate the dehydro-cyclodipeptide intermediate generated by the monooxygase ankB and acts as a hydroxylase that installs the m-OH through a canonical flavin-dependent aromatic hydroxylation mechanism. Within the pathway, the cyclodipeptide synthase ankA acts as the scaffold-generating enzyme and is responsible for formation of the cyclo-Arg-Tyr diketopiperazine (cRY) from L-Arg and L-Tyr. The ankA product cRY is desaturated by the cytochrome P450 monooxygenase ankB to yield a dehydro-cyclodipeptide intermediate. The FAD-dependent monooxygenase ankC then installs the m-OH, ankD catalyzes the attachment of L-homoserine, and ankE ligates citrate to the ankD product to yield NK13650 B. The O-methyltransferase ankF is responsible for methylation of the C-17 phenol group of NK13650 B to produce NK13650 D. Amidation of NK13650 D with L-Asp by ankG then leads to the production of NK13650 C, whereas amidation of NK13650 B produces NK13650 A. The chain is FAD-dependent monooxygenase ankC from Aspergillus thermomutatus (Neosartorya pseudofischeri).